The sequence spans 382 residues: S-adenosylmethionine synthase (382 aa).

His16 contacts ATP. Mg(2+) is bound at residue Asp18. Glu44 provides a ligand contact to K(+). Glu57 and Gln100 together coordinate L-methionine. A flexible loop region spans residues 100–110 (QSPDIAQGVDN). ATP is bound by residues 165–167 (DAK), 231–232 (RF), Asp240, 246–247 (RK), and Lys267. Asp240 provides a ligand contact to L-methionine. Lys271 contributes to the L-methionine binding site.

The protein belongs to the AdoMet synthase family. Homotetramer; dimer of dimers. It depends on Mg(2+) as a cofactor. K(+) serves as cofactor.

It localises to the cytoplasm. It carries out the reaction L-methionine + ATP + H2O = S-adenosyl-L-methionine + phosphate + diphosphate. Its pathway is amino-acid biosynthesis; S-adenosyl-L-methionine biosynthesis; S-adenosyl-L-methionine from L-methionine: step 1/1. Catalyzes the formation of S-adenosylmethionine (AdoMet) from methionine and ATP. The overall synthetic reaction is composed of two sequential steps, AdoMet formation and the subsequent tripolyphosphate hydrolysis which occurs prior to release of AdoMet from the enzyme. The polypeptide is S-adenosylmethionine synthase (Legionella pneumophila (strain Paris)).